Reading from the N-terminus, the 285-residue chain is Malectin (285 aa).

A signal peptide spans 1-26 (MRRVTLHCAARLVIAALWLLVEVCRA). The Lumenal portion of the chain corresponds to 27-262 (ESGAQSLAER…TPNPYATDNS (236 aa)). The a carbohydrate site is built by tyrosine 71, tyrosine 93, tyrosine 120, phenylalanine 121, and aspartate 190. A disordered region spans residues 209-258 (KLQPHPGLEKREEEEEEEEEGEGPEGEKKSASTSPKNPVRSGPRTPNPYA). Over residues 220-232 (EEEEEEEEEGEGP) the composition is skewed to acidic residues. A glycan (N-linked (GlcNAc...) asparagine) is linked at asparagine 261. Residues 263–283 (SLMFPILVAFGVFIPTLFCLC) form a helical membrane-spanning segment. Topologically, residues 284 to 285 (RL) are cytoplasmic.

This sequence belongs to the malectin family.

It is found in the endoplasmic reticulum membrane. Carbohydrate-binding protein with a strong ligand preference for Glc2-N-glycan. May play a role in the early steps of protein N-glycosylation. This chain is Malectin, found in Danio rerio (Zebrafish).